Consider the following 687-residue polypeptide: Ataxin-1-like (687 aa).

Basic and acidic residues predominate over residues 1 to 19 (MKPVHERSQECLPPKKRDL). Disordered regions lie at residues 1 to 46 (MKPV…SEWS), 185 to 223 (ATPP…LDLA), and 261 to 294 (SALE…KGES). Residues 20–197 (PVTSEDMGRT…PPQAASPAQS (178 aa)) form an interaction with NCOR2 and ATXN1 region. Residues 20-197 (PVTSEDMGRT…PPQAASPAQS (178 aa)) are self-association. Polar residues-rich tracts occupy residues 28-43 (RTTS…SDAS) and 198-219 (FNKS…NTQP). Over residues 272 to 283 (RQRERNVRRESE) the composition is skewed to basic and acidic residues. Ser-282 carries the phosphoserine modification. Residue Thr-328 is modified to Phosphothreonine. The interval 356 to 379 (DEPSPLNLSHHNLDHQGEGRGSAR) is disordered. Ser-359 is subject to Phosphoserine. Residues 455–586 (PPPVTSSHLP…SISLQSLNSN (132 aa)) form the AXH domain. Residues 587 to 649 (SVSQASCAPP…PGAQACWPAP (63 aa)) form a disordered region.

This sequence belongs to the ATXN1 family. Homodimer. Interacts (via AXH domain) with NCOR2. Interacts with ATXN1 and CIC. Directly interacts with RBPJ; this interaction is disrupted in the presence of Notch intracellular domain. Competes with ATXN1 for RBPJ-binding. Found in a complex with CIC and ATXN1. Expressed in the cortex and hypothalamus (at protein level). Expressed in neuronal cells. Highly expressed in Purkinje cells of cerebellum.

The protein resides in the nucleus. The protein localises to the cell projection. It is found in the dendrite. In terms of biological role, chromatin-binding factor that repress Notch signaling in the absence of Notch intracellular domain by acting as a CBF1 corepressor. Binds to the HEY promoter and might assist, along with NCOR2, RBPJ-mediated repression. Can suppress the cytotoxicity of ATXN1 in spinocerebellar ataxia type 1 (SCA1). In concert with CIC and ATXN1, involved in brain development. This Mus musculus (Mouse) protein is Ataxin-1-like (Atxn1l).